The sequence spans 131 residues: Small ribosomal subunit protein eS17 (131 aa).

The protein belongs to the eukaryotic ribosomal protein eS17 family.

The protein is Small ribosomal subunit protein eS17 (RPS17) of Theileria annulata.